The sequence spans 405 residues: Argininosuccinate synthase (405 aa).

Residues 11 to 19 and A38 contribute to the ATP site; that span reads AYSGGLDTS. Residues Y91 and S96 each contribute to the L-citrulline site. G121 provides a ligand contact to ATP. Residues T123, N127, and D128 each coordinate L-aspartate. An L-citrulline-binding site is contributed by N127. R131, S182, S191, E267, and Y279 together coordinate L-citrulline.

This sequence belongs to the argininosuccinate synthase family. Type 1 subfamily. Homotetramer.

The protein localises to the cytoplasm. It carries out the reaction L-citrulline + L-aspartate + ATP = 2-(N(omega)-L-arginino)succinate + AMP + diphosphate + H(+). It participates in amino-acid biosynthesis; L-arginine biosynthesis; L-arginine from L-ornithine and carbamoyl phosphate: step 2/3. This is Argininosuccinate synthase from Sphingopyxis alaskensis (strain DSM 13593 / LMG 18877 / RB2256) (Sphingomonas alaskensis).